We begin with the raw amino-acid sequence, 480 residues long: Uridine 5'-monophosphate synthase (480 aa).

N-acetylalanine is present on alanine 2. Residues 2–214 form an OPRTase region; that stretch reads AAVGAALGPL…VFVAANHNGS (213 aa). Tyrosine 37 bears the Phosphotyrosine mark. Serine 214 is modified (phosphoserine). The segment at 215–220 is domain linker; sequence PLSIKE. The OMPdecase stretch occupies residues 221–480; it reads APKELSFSAR…WEAYLSRLGV (260 aa). Residue serine 257 coordinates orotidine 5'-phosphate. Residues serine 257, aspartate 259, and 281–283 each bind UMP; that span reads KTH. Orotidine 5'-phosphate is bound by residues lysine 281, lysine 314, aspartate 317, threonine 321, serine 372, 430-432, and 450-451; these read QQY and GR. Catalysis depends on for OMPdecase activity residues lysine 314 and aspartate 317. UMP contacts are provided by residues aspartate 317, threonine 321, serine 372, 430-432, and 450-451; these read QQY and GR.

It in the N-terminal section; belongs to the purine/pyrimidine phosphoribosyltransferase family. This sequence in the C-terminal section; belongs to the OMP decarboxylase family. As to quaternary structure, homodimer; dimerization is required for enzymatic activity.

The catalysed reaction is orotidine 5'-phosphate + diphosphate = orotate + 5-phospho-alpha-D-ribose 1-diphosphate. It catalyses the reaction orotidine 5'-phosphate + H(+) = UMP + CO2. The protein operates within pyrimidine metabolism; UMP biosynthesis via de novo pathway; UMP from orotate: step 1/2. It functions in the pathway pyrimidine metabolism; UMP biosynthesis via de novo pathway; UMP from orotate: step 2/2. In terms of biological role, bifunctional enzyme catalyzing the last two steps of de novo pyrimidine biosynthesis, orotate phosphoribosyltransferase (OPRT), which converts orotate to orotidine-5'-monophosphate (OMP), and orotidine-5'-monophosphate decarboxylase (ODC), the terminal enzymatic reaction that decarboxylates OMP to uridine monophosphate (UMP). In Pongo abelii (Sumatran orangutan), this protein is Uridine 5'-monophosphate synthase (UMPS).